The following is a 119-amino-acid chain: MKRIAFVFSTVPHGTAAGREGLDALLATSALTDELAVFFIADGVFQLLPGQKPDAVLARDYIATFKLLDLYDIEQCWVCAASLRERGLDPQTPFVVEATPLEADALRRELANYDVILRF.

This sequence belongs to the DsrF/TusC family. Heterohexamer, formed by a dimer of trimers. The hexameric TusBCD complex contains 2 copies each of TusB, TusC and TusD. The TusBCD complex interacts with TusE.

The protein resides in the cytoplasm. Part of a sulfur-relay system required for 2-thiolation of 5-methylaminomethyl-2-thiouridine (mnm(5)s(2)U) at tRNA wobble positions. This Escherichia coli O157:H7 protein is Protein TusC.